The primary structure comprises 174 residues: Larval cuticle protein A1A (174 aa).

2 repeat units span residues Ala45–Val48 and Ala67–Val70. A Chitin-binding type R&amp;R domain is found at Asn84–Ala150. Residues Ala155–Ala158 form repeat 3.

Its function is as follows. Component of the cuticle of the larva of Tenebrio molitor. The sequence is that of Larval cuticle protein A1A from Tenebrio molitor (Yellow mealworm beetle).